The chain runs to 83 residues: Neurotoxin LmNaTx10 (83 aa).

The N-terminal stretch at 1 to 19 (MNFLIFIAVASSLALGALC) is a signal peptide. One can recognise an LCN-type CS-alpha/beta domain in the interval 21–80 (KEGYPYDGNNCRYICFRNQYCDDLCKKLKGESGYCYGWNQSCYCYGLPDTEKTKPDKRCH). Disulfide bonds link Cys31-Cys79, Cys35-Cys55, Cys41-Cys62, and Cys45-Cys64.

The protein belongs to the long (4 C-C) scorpion toxin superfamily. Sodium channel inhibitor family. Alpha subfamily. As to expression, expressed by the venom gland.

It is found in the secreted. Binds voltage-independently at site-3 of voltage-gated sodium channels (Nav) and inhibits the inactivation of the activated channels, thereby blocking neuronal transmission. This chain is Neurotoxin LmNaTx10, found in Lychas mucronatus (Chinese swimming scorpion).